Consider the following 215-residue polypeptide: ATP phosphoribosyltransferase (215 aa).

Belongs to the ATP phosphoribosyltransferase family. Short subfamily. In terms of assembly, heteromultimer composed of HisG and HisZ subunits.

The protein localises to the cytoplasm. It carries out the reaction 1-(5-phospho-beta-D-ribosyl)-ATP + diphosphate = 5-phospho-alpha-D-ribose 1-diphosphate + ATP. The protein operates within amino-acid biosynthesis; L-histidine biosynthesis; L-histidine from 5-phospho-alpha-D-ribose 1-diphosphate: step 1/9. Its function is as follows. Catalyzes the condensation of ATP and 5-phosphoribose 1-diphosphate to form N'-(5'-phosphoribosyl)-ATP (PR-ATP). Has a crucial role in the pathway because the rate of histidine biosynthesis seems to be controlled primarily by regulation of HisG enzymatic activity. The protein is ATP phosphoribosyltransferase (hisG) of Clostridium acetobutylicum (strain ATCC 824 / DSM 792 / JCM 1419 / IAM 19013 / LMG 5710 / NBRC 13948 / NRRL B-527 / VKM B-1787 / 2291 / W).